Reading from the N-terminus, the 237-residue chain is KH homology domain-containing protein 1 (237 aa).

2 helical membrane-spanning segments follow: residues 7-29 (RLFRVLFVIETVSEYGVLIFIYG) and 33-50 (LQTLAMLLIGTVSFHLWI). The KH; atypical domain occupies 96–155 (PMVFHMEEDQEELIFGHGDTYLRCIEVHSHTLIQLESWFTATGQTRVTVVGPHRARQWLL).

The protein belongs to the KHDC1 family.

The protein resides in the membrane. This Homo sapiens (Human) protein is KH homology domain-containing protein 1.